Consider the following 419-residue polypeptide: Synaptotagmin-1 (419 aa).

Residues 1 to 58 (MVSESHHEALAAPPVTTVATVLPSNATEPASPGEGKEDAFSKLKEKFMNELHKIPLPP) lie on the Vesicular side of the membrane. N25 carries N-linked (GlcNAc...) asparagine glycosylation. A helical membrane pass occupies residues 59–80 (WALIAIAIVAVLLVLTCCFCIC). S-palmitoyl cysteine attachment occurs at residues C75, C76, C78, C80, and C83. At 81 to 419 (KKCLFKKKNK…EVDAMLAVKK (339 aa)) the chain is on the cytoplasmic side. The interval 108 to 139 (KDLGKTMKDQDDDAETGLTDGEEKEEPKEEEK) is disordered. Residues 117–131 (QDDDAETGLTDGEEK) are compositionally biased toward acidic residues. A Phosphothreonine modification is found at T126. The segment at 133-379 (EPKEEEKLGK…AIGKVFVGYN (247 aa)) is phospholipid binding. Residues 139–258 (KLGKLQYSLD…DFGHVTEEWR (120 aa)) form the C2 1 domain. Positions 169, 170, and 176 each coordinate Ca(2+). Position 227 is a phosphotyrosine (Y227). Ca(2+)-binding residues include D228, F229, D230, S233, K234, and D236. Phosphoserine is present on S262. In terms of domain architecture, C2 2 spans 270-403 (KLGDICFSLR…NPRRPIAQWH (134 aa)). Residues D301 and D307 each contribute to the Ca(2+) site. S340 and S342 each carry phosphoserine. Ca(2+) contacts are provided by D361, D363, and D369.

This sequence belongs to the synaptotagmin family. As to quaternary structure, homotetramer. Heterodimer; heterodimerizes with SYT2 in presence of calcium. Interacts with SCAMP5. Interacts with STON2. Forms a complex with SV2B, syntaxin 1 and SNAP25. Interacts with SV2A, SV2B and SV2C. Interacts with RIMS1. Interacts with PRRT2. Interacts with DNAJC5 in a phosphorylation-dependent manner. Interacts (via N-terminus) with RAB3A. Interacts with SYT12. Interacts with calmodulin. Interacts with DNM1 (via C-terminal proline-rich domain (PRD)); this interaction facilitates vesicle fission during clathrin-mediated endocytosis (CME). Ca(2+) serves as cofactor. In terms of processing, glycosylated.

It localises to the cytoplasmic vesicle. The protein resides in the secretory vesicle membrane. Its subcellular location is the secretory vesicle. It is found in the synaptic vesicle membrane. The protein localises to the chromaffin granule membrane. It localises to the cytoplasm. Calcium sensor that participates in triggering neurotransmitter release at the synapse. May have a regulatory role in the membrane interactions during trafficking of synaptic vesicles at the active zone of the synapse. It binds acidic phospholipids with a specificity that requires the presence of both an acidic head group and a diacyl backbone. A Ca(2+)-dependent interaction between synaptotagmin and putative receptors for activated protein kinase C has also been reported. It can bind to at least three additional proteins in a Ca(2+)-independent manner; these are neurexins, syntaxin and AP2. Plays a role in dendrite formation by melanocytes. The polypeptide is Synaptotagmin-1 (Pongo abelii (Sumatran orangutan)).